The following is a 297-amino-acid chain: Mitochondrial ornithine transporter 1 (297 aa).

Solcar repeat units lie at residues 15–97 (GSPA…LKLT), 102–205 (DPTL…FKKN), and 212–292 (KPHF…FRET). 6 consecutive transmembrane segments (helical) span residues 18–38 (ASTFSAALVSSAISNVIGYPL), 72–91 (GLTLPLISATLSRSVSFTVY), 107–127 (YFISGLGTGTFISLFACPFEY), 184–204 (HLTRDALGSACYFTIYETFKK), 215–235 (FAYAFSGAFCGALSWILVFPV), and 264–285 (IYRGIGISLMRSALINSCNFTL).

This sequence belongs to the mitochondrial carrier (TC 2.A.29) family.

Its subcellular location is the mitochondrion inner membrane. Functionally, required for arginine biosynthesis. Transports ornithine synthesized from glutamate in the mitochondrial matrix to the cytosol, where it is converted to arginine. In Schizosaccharomyces pombe (strain 972 / ATCC 24843) (Fission yeast), this protein is Mitochondrial ornithine transporter 1.